A 58-amino-acid polypeptide reads, in one-letter code: Large ribosomal subunit protein bL32c (58 aa).

It belongs to the bacterial ribosomal protein bL32 family.

It localises to the plastid. It is found in the chloroplast. This is Large ribosomal subunit protein bL32c (rpl32) from Adiantum capillus-veneris (Maidenhair fern).